The primary structure comprises 36 residues: Photosystem I reaction center subunit VIII (36 aa).

A helical membrane pass occupies residues serine 8–leucine 28.

The protein belongs to the PsaI family.

The protein resides in the plastid. Its subcellular location is the chloroplast thylakoid membrane. Its function is as follows. May help in the organization of the PsaL subunit. The polypeptide is Photosystem I reaction center subunit VIII (Daucus carota (Wild carrot)).